Here is a 256-residue protein sequence, read N- to C-terminus: Acetyl-coenzyme A carboxylase carboxyl transferase subunit alpha (256 aa).

A CoA carboxyltransferase C-terminal domain is found at 1 to 236 (MSDVARILKE…KTAIVDELAE (236 aa)).

It belongs to the AccA family. In terms of assembly, acetyl-CoA carboxylase is a heterohexamer composed of biotin carboxyl carrier protein (AccB), biotin carboxylase (AccC) and two subunits each of ACCase subunit alpha (AccA) and ACCase subunit beta (AccD).

The protein localises to the cytoplasm. It catalyses the reaction N(6)-carboxybiotinyl-L-lysyl-[protein] + acetyl-CoA = N(6)-biotinyl-L-lysyl-[protein] + malonyl-CoA. It functions in the pathway lipid metabolism; malonyl-CoA biosynthesis; malonyl-CoA from acetyl-CoA: step 1/1. Its function is as follows. Component of the acetyl coenzyme A carboxylase (ACC) complex. First, biotin carboxylase catalyzes the carboxylation of biotin on its carrier protein (BCCP) and then the CO(2) group is transferred by the carboxyltransferase to acetyl-CoA to form malonyl-CoA. This chain is Acetyl-coenzyme A carboxylase carboxyl transferase subunit alpha, found in Streptococcus thermophilus (strain ATCC BAA-250 / LMG 18311).